The following is a 119-amino-acid chain: uncharacterized protein (119 aa).

The tract at residues 78-119 is disordered; that stretch reads SHRKSQQHQTQGNQVLRGTRKLESPTVGPRPGLRRQHTRNFL. Polar residues predominate over residues 84–93; the sequence is QHQTQGNQVL. Residues 109–119 show a composition bias toward basic residues; sequence GLRRQHTRNFL.

This is an uncharacterized protein from Saccharomyces cerevisiae (strain ATCC 204508 / S288c) (Baker's yeast).